Consider the following 186-residue polypeptide: Threonylcarbamoyl-AMP synthase (186 aa).

The YrdC-like domain maps to 6 to 186 (GFRLRLAANA…FDAMSGRRIR (181 aa)).

Belongs to the SUA5 family. TsaC subfamily.

Its subcellular location is the cytoplasm. The enzyme catalyses L-threonine + hydrogencarbonate + ATP = L-threonylcarbamoyladenylate + diphosphate + H2O. Required for the formation of a threonylcarbamoyl group on adenosine at position 37 (t(6)A37) in tRNAs that read codons beginning with adenine. Catalyzes the conversion of L-threonine, HCO(3)(-)/CO(2) and ATP to give threonylcarbamoyl-AMP (TC-AMP) as the acyladenylate intermediate, with the release of diphosphate. The sequence is that of Threonylcarbamoyl-AMP synthase from Methylococcus capsulatus (strain ATCC 33009 / NCIMB 11132 / Bath).